Reading from the N-terminus, the 501-residue chain is L-arabinose isomerase (501 aa).

Glutamate 306, glutamate 333, histidine 350, and histidine 450 together coordinate Mn(2+).

It belongs to the arabinose isomerase family. Homohexamer. The cofactor is Mn(2+).

The enzyme catalyses beta-L-arabinopyranose = L-ribulose. Its pathway is carbohydrate degradation; L-arabinose degradation via L-ribulose; D-xylulose 5-phosphate from L-arabinose (bacterial route): step 1/3. Catalyzes the conversion of L-arabinose to L-ribulose. This is L-arabinose isomerase from Pectobacterium atrosepticum (strain SCRI 1043 / ATCC BAA-672) (Erwinia carotovora subsp. atroseptica).